The sequence spans 1339 residues: MRATGTLQVLCFLLSLARGSEMGNSQAVCPGTLNGLSVTGDADNQYQTLYKLYEKCEVVMGNLEIVLTGHNADLSFLQWIREVTGYVLVAMNEFSVLPLPNLRVVRGTQVYDGKFAIFVMLNYNTNSSHALRQLKFTQLTEILSGGVYIEKNDKLCHMDTIDWRDIVRVRGAEIVVKNNGANCPPCHEVCKGRCWGPGPDDCQILTKTICAPQCNGRCFGPNPNQCCHDECAGGCSGPQDTDCFACRRFNDSGACVPRCPEPLVYNKLTFQLEPNPHTKYQYGGVCVASCPHNFVVDQTFCVRACPPDKMEVDKHGLKMCEPCGGLCPKACEGTGSGSRYQTVDSSNIDGFVNCTKILGNLDFLITGLNVDPWHKIPALDPEKLNVFRTVREITGYLNIQSWPPHMHNFSVFSNLTTIGGRSLYNRGFSLLIMKNLNVTSLGFRSLKEISAGRVYISANQQLCYHHSLNWTRLLRGPSEERLDIKYDRPLGECLAEGKVCDPLCSSGGCWGPGPGQCLSCRNYSREGVCVTHCNFLQGEPREFVHEAQCFSCHPECLPMEGTSTCNGSGSDACARCAHFRDGPHCVNSCPHGILGAKGPIYKYPDAQNECRPCHENCTQGCNGPELQDCLGQAEVLMSKPHLVIAVTVGLAVILMILGGSFLYWRGRRIQNKRAMRRYLERGESIEPLDPSEKANKVLARIFKETELRKLKVLGSGVFGTVHKGIWIPEGESIKIPVCIKVIEDKSGRQSFQAVTDHMLAVGSLDHAHIVRLLGLCPGSSLQLVTQYLPLGSLLDHVKQHRETLGPQLLLNWGVQIAKGMYYLEEHSMVHRDLALRNVMLKSPSQVQVADFGVADLLPPDDKQLLHSEAKTPIKWMALESIHFGKYTHQSDVWSYGVTVWELMTFGAEPYAGLRLAEIPDLLEKGERLAQPQICTIDVYMVMVKCWMIDENIRPTFKELANEFTRMARDPPRYLVIKRASGPGTPPAAEPSVLTTKELQEAELEPELDLDLDLEAEEEGLATSLGSALSLPTGTLTRPRGSQSLLSPSSGYMPMNQSSLGEACLDSAVLGGREQFSRPISLHPIPRGRPASESSEGHVTGSEAELQEKVSVCRSRSRSRSPRPRGDSAYHSQRHSLLTPVTPLSPPGLEEEDGNGYVMPDTHLRGASSSREGTLSSVGLSSVLGTEEEDEDEEYEYMNRKRRGSPPRPPRPGSLEELGYEYMDVGSDLSASLGSTQSCPLHPMAIVPSAGTTPDEDYEYMNRRRGAGGAGGDYAAMGACPAAEQGYEEMRAFQGPGHHAPHVRYARLKTLRSLEATDSAFDNPDYWHSRLFPKANAQRT.

The N-terminal stretch at 1–19 is a signal peptide; it reads MRATGTLQVLCFLLSLARG. The Extracellular segment spans residues 20 to 643; sequence SEMGNSQAVC…EVLMSKPHLV (624 aa). N126 is a glycosylation site (N-linked (GlcNAc...) asparagine). Cystine bridges form between C186-C194, C190-C202, C210-C218, C214-C226, C227-C235, C231-C243, C246-C255, C259-C286, C290-C301, C305-C320, and C323-C327. N-linked (GlcNAc...) asparagine glycosylation occurs at N250. 5 N-linked (GlcNAc...) asparagine glycosylation sites follow: N353, N408, N414, N437, and N469. Intrachain disulfides connect C500–C509, C504–C517, C520–C529, C533–C549, C552–C565, C556–C573, C576–C585, C589–C610, C613–C621, and C617–C629. N522 is a glycosylation site (N-linked (GlcNAc...) asparagine). N-linked (GlcNAc...) asparagine glycosylation is present at N566. N616 carries an N-linked (GlcNAc...) asparagine glycan. Residues 644–662 form a helical membrane-spanning segment; it reads IAVTVGLAVILMILGGSFL. Over 663 to 1339 the chain is Cytoplasmic; sequence YWRGRRIQNK…LFPKANAQRT (677 aa). Phosphoserine is present on S684. Residues 707–964 form the Protein kinase domain; sequence LRKLKVLGSG…TFKELANEFT (258 aa). ATP-binding positions include 713 to 721, K740, 786 to 788, and 832 to 837; these read LGSGVFGTV, QYL, and DLALRN. The active-site Proton acceptor is the D832. A Phosphoserine modification is found at S980. The segment covering 1023-1036 has biased composition (low complexity); the sequence is SLGSALSLPTGTLT. Disordered stretches follow at residues 1023–1052 and 1078–1215; these read SLGSALSLPTGTLTRPRGSQSLLSPSSGYM and PISL…GSLE. The span at 1039-1052 shows a compositional bias: polar residues; it reads RGSQSLLSPSSGYM. Residues 1172-1184 show a composition bias toward low complexity; it reads GTLSSVGLSSVLG. Acidic residues predominate over residues 1185–1195; sequence TEEEDEDEEYE.

The protein belongs to the protein kinase superfamily. Tyr protein kinase family. EGF receptor subfamily. In terms of assembly, monomer and homodimer. Heterodimer with each of the other ERBB receptors (Potential). Interacts with CSPG5, PA2G4, GRB7, MYOC and MUC1. Found in a ternary complex with NRG1 and ITGAV:ITGB3 or ITGA6:ITGB4. In terms of processing, autophosphorylated. Ligand-binding increases phosphorylation on tyrosine residues and promotes its association with the p85 subunit of phosphatidylinositol 3-kinase.

It localises to the membrane. It carries out the reaction L-tyrosyl-[protein] + ATP = O-phospho-L-tyrosyl-[protein] + ADP + H(+). Tyrosine-protein kinase that plays an essential role as cell surface receptor for neuregulins. Binds to neuregulin-1 (NRG1) and is activated by it; ligand-binding increases phosphorylation on tyrosine residues and promotes its association with the p85 subunit of phosphatidylinositol 3-kinase. May also be activated by CSPG5. Involved in the regulation of myeloid cell differentiation. The protein is Receptor tyrosine-protein kinase erbB-3 (Erbb3) of Rattus norvegicus (Rat).